A 91-amino-acid polypeptide reads, in one-letter code: Acylphosphatase (91 aa).

Residues 3–91 (CLKAVVKGKV…GNYGDFHIKY (89 aa)) enclose the Acylphosphatase-like domain. Catalysis depends on residues Arg18 and Asn36.

Belongs to the acylphosphatase family.

The enzyme catalyses an acyl phosphate + H2O = a carboxylate + phosphate + H(+). The polypeptide is Acylphosphatase (acyP) (Dehalococcoides mccartyi (strain ATCC BAA-2266 / KCTC 15142 / 195) (Dehalococcoides ethenogenes (strain 195))).